A 304-amino-acid chain; its full sequence is Phosphoribosylaminoimidazole-succinocarboxamide synthase (304 aa).

The protein belongs to the SAICAR synthetase family.

The enzyme catalyses 5-amino-1-(5-phospho-D-ribosyl)imidazole-4-carboxylate + L-aspartate + ATP = (2S)-2-[5-amino-1-(5-phospho-beta-D-ribosyl)imidazole-4-carboxamido]succinate + ADP + phosphate + 2 H(+). The protein operates within purine metabolism; IMP biosynthesis via de novo pathway; 5-amino-1-(5-phospho-D-ribosyl)imidazole-4-carboxamide from 5-amino-1-(5-phospho-D-ribosyl)imidazole-4-carboxylate: step 1/2. The sequence is that of Phosphoribosylaminoimidazole-succinocarboxamide synthase from Corynebacterium efficiens (strain DSM 44549 / YS-314 / AJ 12310 / JCM 11189 / NBRC 100395).